The primary structure comprises 63 residues: SPbeta prophage-derived uncharacterized protein YotC (63 aa).

This is SPbeta prophage-derived uncharacterized protein YotC (yotC) from Bacillus subtilis (strain 168).